We begin with the raw amino-acid sequence, 84 residues long: Three-finger toxin 3FTx-1 (84 aa).

Positions 1–21 (MKTLLLTLVVVTIVCLDLGNS) are cleaved as a signal peptide. 4 disulfides stabilise this stretch: cysteine 24–cysteine 41, cysteine 34–cysteine 59, cysteine 63–cysteine 71, and cysteine 72–cysteine 77. N-linked (GlcNAc...) asparagine glycosylation occurs at asparagine 78.

This sequence belongs to the three-finger toxin family. Short-chain subfamily. As to expression, expressed by the venom gland.

The protein resides in the secreted. This is Three-finger toxin 3FTx-1 from Micrurus corallinus (Brazilian coral snake).